The chain runs to 510 residues: Probable inositol 3-phosphate synthase isozyme 3 (510 aa).

This sequence belongs to the myo-inositol 1-phosphate synthase family. NAD(+) serves as cofactor. As to expression, expressed in siliques, leaves, roots, seed endosperm, but not in embryos. Highest expression in roots. Confined to vascular tissue and hydathodes of leaves.

It is found in the cytoplasm. It carries out the reaction D-glucose 6-phosphate = 1D-myo-inositol 3-phosphate. The protein operates within polyol metabolism; myo-inositol biosynthesis; myo-inositol from D-glucose 6-phosphate: step 1/2. Key enzyme in myo-inositol biosynthesis pathway that catalyzes the conversion of glucose 6-phosphate to 1-myo-inositol 1-phosphate in a NAD-dependent manner. In Arabidopsis thaliana (Mouse-ear cress), this protein is Probable inositol 3-phosphate synthase isozyme 3 (IPS3).